A 447-amino-acid polypeptide reads, in one-letter code: Probable ribonuclease FAU-1 (447 aa).

The interval 424 to 447 (PEAPGGKICTPEGLTSAPPRSSSA) is disordered.

The protein belongs to the FAU-1 family.

In terms of biological role, probable RNase involved in rRNA stability through maturation and/or degradation of precursor rRNAs. Binds to RNA in loop regions with AU-rich sequences. The protein is Probable ribonuclease FAU-1 of Pyrobaculum neutrophilum (strain DSM 2338 / JCM 9278 / NBRC 100436 / V24Sta) (Thermoproteus neutrophilus).